The chain runs to 229 residues: All-trans retinoic acid-induced differentiation factor (229 aa).

Residues 1–30 (MAPHDPGSLTTLVPWAAALLLALGVERALA) form the signal peptide. At 31–199 (LPEICTQCPG…YKCMRQGSFS (169 aa)) the chain is on the extracellular side. Residues Asn44, Asn79, Asn157, and Asn168 are each glycosylated (N-linked (GlcNAc...) asparagine). Positions 152–193 (QKNLCNNTGDPEMCPENGSCVPDGPGLLQCVCADGFHGYKCM) constitute an EGF-like domain. Intrachain disulfides connect Cys156–Cys171, Cys165–Cys181, and Cys183–Cys192. A helical membrane pass occupies residues 200-220 (LLMFFGILGATTLSVSILLWA). Residues 221 to 229 (TQRRKAKTS) lie on the Cytoplasmic side of the membrane.

In terms of assembly, interacts with NELL1; the interaction promotes osteoblastic differentiation and mineralization. Interacts with SLC37A3; the interaction is direct and both proteins are mutually dependent for their stability. Weakly expressed in hematopoietic cell lines.

The protein resides in the nucleus envelope. Its subcellular location is the cell membrane. It localises to the lysosome membrane. Functionally, promotes osteoblast cell differentiation and terminal mineralization. Plays a role in inducing the cell cycle arrest via inhibiting CCND1 expression in all-trans-retinoic acid (ATRA) signal pathway. In osteoclasts, forms a transporter complex with ATRAID for nitrogen-containing-bisphophonates (N-BPs) required for releasing N-BP molecules that have trafficked to lysosomes through fluid-phase endocytosis into the cytosol. The sequence is that of All-trans retinoic acid-induced differentiation factor from Homo sapiens (Human).